A 253-amino-acid polypeptide reads, in one-letter code: Imidazole glycerol phosphate synthase subunit HisF (253 aa).

Residues aspartate 11 and aspartate 130 contribute to the active site.

The protein belongs to the HisA/HisF family. As to quaternary structure, heterodimer of HisH and HisF.

The protein resides in the cytoplasm. The enzyme catalyses 5-[(5-phospho-1-deoxy-D-ribulos-1-ylimino)methylamino]-1-(5-phospho-beta-D-ribosyl)imidazole-4-carboxamide + L-glutamine = D-erythro-1-(imidazol-4-yl)glycerol 3-phosphate + 5-amino-1-(5-phospho-beta-D-ribosyl)imidazole-4-carboxamide + L-glutamate + H(+). It functions in the pathway amino-acid biosynthesis; L-histidine biosynthesis; L-histidine from 5-phospho-alpha-D-ribose 1-diphosphate: step 5/9. Functionally, IGPS catalyzes the conversion of PRFAR and glutamine to IGP, AICAR and glutamate. The HisF subunit catalyzes the cyclization activity that produces IGP and AICAR from PRFAR using the ammonia provided by the HisH subunit. The chain is Imidazole glycerol phosphate synthase subunit HisF from Acetivibrio thermocellus (strain ATCC 27405 / DSM 1237 / JCM 9322 / NBRC 103400 / NCIMB 10682 / NRRL B-4536 / VPI 7372) (Clostridium thermocellum).